A 152-amino-acid chain; its full sequence is Small ribosomal subunit protein uS13A (152 aa).

The protein belongs to the universal ribosomal protein uS13 family. As to quaternary structure, component of the small ribosomal subunit (SSU). Mature yeast ribosomes consist of a small (40S) and a large (60S) subunit. The 40S small subunit contains 1 molecule of ribosomal RNA (18S rRNA) and at least 33 different proteins. The large 60S subunit contains 3 rRNA molecules (25S, 5.8S and 5S rRNA) and at least 46 different proteins.

It is found in the cytoplasm. In terms of biological role, component of the ribosome, a large ribonucleoprotein complex responsible for the synthesis of proteins in the cell. The small ribosomal subunit (SSU) binds messenger RNAs (mRNAs) and translates the encoded message by selecting cognate aminoacyl-transfer RNA (tRNA) molecules. The large subunit (LSU) contains the ribosomal catalytic site termed the peptidyl transferase center (PTC), which catalyzes the formation of peptide bonds, thereby polymerizing the amino acids delivered by tRNAs into a polypeptide chain. The nascent polypeptides leave the ribosome through a tunnel in the LSU and interact with protein factors that function in enzymatic processing, targeting, and the membrane insertion of nascent chains at the exit of the ribosomal tunnel. The polypeptide is Small ribosomal subunit protein uS13A (rps1801) (Schizosaccharomyces pombe (strain 972 / ATCC 24843) (Fission yeast)).